Here is a 153-residue protein sequence, read N- to C-terminus: Nucleoside diphosphate kinase 3 (153 aa).

Positions 11, 59, 87, 93, 104, and 114 each coordinate ATP. His-117 (pros-phosphohistidine intermediate) is an active-site residue.

Belongs to the NDK family. As to quaternary structure, homohexamer. The cofactor is Mg(2+).

It localises to the plastid. The protein localises to the chloroplast thylakoid lumen. The catalysed reaction is a 2'-deoxyribonucleoside 5'-diphosphate + ATP = a 2'-deoxyribonucleoside 5'-triphosphate + ADP. It carries out the reaction a ribonucleoside 5'-diphosphate + ATP = a ribonucleoside 5'-triphosphate + ADP. In terms of biological role, major role in the synthesis of nucleoside triphosphates other than ATP. The ATP gamma phosphate is transferred to the NDP beta phosphate via a ping-pong mechanism, using a phosphorylated active-site intermediate. Shows the highest specificity towards GDP. The polypeptide is Nucleoside diphosphate kinase 3 (Spinacia oleracea (Spinach)).